We begin with the raw amino-acid sequence, 179 residues long: Large ribosomal subunit protein uL5 (179 aa).

The protein belongs to the universal ribosomal protein uL5 family. Part of the 50S ribosomal subunit; part of the 5S rRNA/L5/L18/L25 subcomplex. Contacts the 5S rRNA and the P site tRNA. Forms a bridge to the 30S subunit in the 70S ribosome.

In terms of biological role, this is one of the proteins that bind and probably mediate the attachment of the 5S RNA into the large ribosomal subunit, where it forms part of the central protuberance. In the 70S ribosome it contacts protein S13 of the 30S subunit (bridge B1b), connecting the 2 subunits; this bridge is implicated in subunit movement. Contacts the P site tRNA; the 5S rRNA and some of its associated proteins might help stabilize positioning of ribosome-bound tRNAs. The polypeptide is Large ribosomal subunit protein uL5 (Marinobacter nauticus (strain ATCC 700491 / DSM 11845 / VT8) (Marinobacter aquaeolei)).